Consider the following 164-residue polypeptide: ATP synthase subunit b (164 aa).

Residues 8 to 28 (FGIIFWQTITLLFVLFILGKF) traverse the membrane as a helical segment.

The protein belongs to the ATPase B chain family. F-type ATPases have 2 components, F(1) - the catalytic core - and F(0) - the membrane proton channel. F(1) has five subunits: alpha(3), beta(3), gamma(1), delta(1), epsilon(1). F(0) has three main subunits: a(1), b(2) and c(10-14). The alpha and beta chains form an alternating ring which encloses part of the gamma chain. F(1) is attached to F(0) by a central stalk formed by the gamma and epsilon chains, while a peripheral stalk is formed by the delta and b chains.

It is found in the cell membrane. In terms of biological role, f(1)F(0) ATP synthase produces ATP from ADP in the presence of a proton or sodium gradient. F-type ATPases consist of two structural domains, F(1) containing the extramembraneous catalytic core and F(0) containing the membrane proton channel, linked together by a central stalk and a peripheral stalk. During catalysis, ATP synthesis in the catalytic domain of F(1) is coupled via a rotary mechanism of the central stalk subunits to proton translocation. Component of the F(0) channel, it forms part of the peripheral stalk, linking F(1) to F(0). The sequence is that of ATP synthase subunit b from Amoebophilus asiaticus (strain 5a2).